The following is a 196-amino-acid chain: Peptidyl-tRNA hydrolase (196 aa).

Tyr17 contacts tRNA. Catalysis depends on His22, which acts as the Proton acceptor. TRNA contacts are provided by Phe68, Asn70, and Asn116.

The protein belongs to the PTH family. As to quaternary structure, monomer.

It localises to the cytoplasm. It catalyses the reaction an N-acyl-L-alpha-aminoacyl-tRNA + H2O = an N-acyl-L-amino acid + a tRNA + H(+). Its function is as follows. Hydrolyzes ribosome-free peptidyl-tRNAs (with 1 or more amino acids incorporated), which drop off the ribosome during protein synthesis, or as a result of ribosome stalling. In terms of biological role, catalyzes the release of premature peptidyl moieties from peptidyl-tRNA molecules trapped in stalled 50S ribosomal subunits, and thus maintains levels of free tRNAs and 50S ribosomes. In Photorhabdus laumondii subsp. laumondii (strain DSM 15139 / CIP 105565 / TT01) (Photorhabdus luminescens subsp. laumondii), this protein is Peptidyl-tRNA hydrolase.